The following is a 522-amino-acid chain: Insulinoma-associated protein 1 (522 aa).

Residues 1–12 are compositionally biased toward basic residues; the sequence is MPRGFLVKRSKK. Positions 1–20 are SNAG domain; the sequence is MPRGFLVKRSKKSTPVSYRI. Disordered stretches follow at residues 1–112 and 182–235; these read MPRG…SREH and AAEA…KPKA. Residues 2–7 form a required and sufficient for interaction with KDM1A region; sequence PRGFLV. The interval 43–57 is necessary for interaction with CCND1; that stretch reads PPAPGPGPVPGPLQP. Over residues 43-61 the composition is skewed to pro residues; sequence PPAPGPGPVPGPLQPPPPT. 2 stretches are compositionally biased toward low complexity: residues 66-75 and 212-228; these read AALAAALACA and ASAA…AKAP. The segment at 277–297 adopts a C2H2-type 1; atypical zinc-finger fold; sequence FICQLCKEEYADPFALAQHKC. The C2H2-type 2 zinc-finger motif lies at 305–327; the sequence is YRCPECAKVFSCPANLASHRRWH. Positions 325–373 are disordered; that stretch reads RWHKPRPAPAAARACEPETPARAEAREATGGGGSDRDTPSPGGVSESGS. Basic and acidic residues predominate over residues 339–351; sequence CEPETPARAEARE. C2H2-type zinc fingers lie at residues 378-400, 453-476, and 481-504; these read YECH…LLAH, HLCP…RLLH, and FPCK…NKCH.

Belongs to the INSM1 family. Interacts (via the N-terminal region) with CCND1 (via cyclin N-terminal domain); the interaction competes with the binding of CCND1 to CDK4 during cell cycle progression and increases its transcriptional repressor activity. Interacts with HDAC3; the interaction increases its transcriptional repressor activity. Interacts (via the SNAG domain) with HDAC1. Interacts (via the SNAG domain) with HDAC2. Interacts (via the SNAG domain) with KDM1A. Interacts (via the SNAG domain) with RCOR1. Interacts with SORBS1.

The protein resides in the nucleus. Functionally, sequence-specific DNA-binding transcriptional regulator that plays a key role in neurogenesis and neuroendocrine cell differentiation during embryonic and/or fetal development. Binds to the consensus sequence 5'-[TG][TC][TC][TT][GA]GGG[CG]A-3' in target promoters. Acts as a transcriptional repressor of NEUROD1 and INS expression via its interaction with cyclin CCND1 in a cell cycle-independent manner. Negatively regulates skeletal muscle-specific gene expression in endocrine cells of the pituitary by inhibiting the Notch signaling pathway. Represses target gene transcription by recruiting chromatin-modifying factors, such as HDAC1, HDAC2, HDAC3, KDM1A and RCOR1 histone deacetylases. Binds to its own promoter, suggesting autoregulation as a self-control feedback mechanism. Competes with histone H3 for the same binding site on the histone demethylase complex formed by KDM1A and RCOR1, and thereby inhibits demethylation of histone H3 at 'Lys-4'. Promotes the generation and expansion of neuronal basal progenitor cells in the developing neocortex. Involved in the differentiation of endocrine cells of the developing anterior pituitary gland, of the pancreas and intestine, and of sympatho-adrenal cells in the peripheral nervous system. Promotes cell cycle signaling arrest and inhibition of cellular proliferation. This is Insulinoma-associated protein 1 (INSM1) from Bos taurus (Bovine).